A 263-amino-acid chain; its full sequence is Acyl-[acyl-carrier-protein]--UDP-N-acetylglucosamine O-acyltransferase (263 aa).

Belongs to the transferase hexapeptide repeat family. LpxA subfamily. Homotrimer.

The protein localises to the cytoplasm. It carries out the reaction a (3R)-hydroxyacyl-[ACP] + UDP-N-acetyl-alpha-D-glucosamine = a UDP-3-O-[(3R)-3-hydroxyacyl]-N-acetyl-alpha-D-glucosamine + holo-[ACP]. The protein operates within glycolipid biosynthesis; lipid IV(A) biosynthesis; lipid IV(A) from (3R)-3-hydroxytetradecanoyl-[acyl-carrier-protein] and UDP-N-acetyl-alpha-D-glucosamine: step 1/6. Functionally, involved in the biosynthesis of lipid A, a phosphorylated glycolipid that anchors the lipopolysaccharide to the outer membrane of the cell. In Tolumonas auensis (strain DSM 9187 / NBRC 110442 / TA 4), this protein is Acyl-[acyl-carrier-protein]--UDP-N-acetylglucosamine O-acyltransferase.